A 476-amino-acid polypeptide reads, in one-letter code: Argininosuccinate lyase (476 aa).

Belongs to the lyase 1 family. Argininosuccinate lyase subfamily.

It localises to the cytoplasm. The catalysed reaction is 2-(N(omega)-L-arginino)succinate = fumarate + L-arginine. It functions in the pathway amino-acid biosynthesis; L-arginine biosynthesis; L-arginine from L-ornithine and carbamoyl phosphate: step 3/3. This chain is Argininosuccinate lyase, found in Acaryochloris marina (strain MBIC 11017).